The chain runs to 202 residues: Thymidine kinase (202 aa).

Residues 16-23 (GPMFSGKS) and 99-102 (DEVQ) contribute to the ATP site. The active-site Proton acceptor is E100. The Zn(2+) site is built by C156, C159, C194, and H197.

It belongs to the thymidine kinase family. Homotetramer.

The protein resides in the cytoplasm. The enzyme catalyses thymidine + ATP = dTMP + ADP + H(+). In Deinococcus deserti (strain DSM 17065 / CIP 109153 / LMG 22923 / VCD115), this protein is Thymidine kinase.